We begin with the raw amino-acid sequence, 221 residues long: Ras-related protein RABA5a (221 aa).

21-28 (GDSAVGKS) is a binding site for GTP. The short motif at 43-51 (SKSTIGVEF) is the Effector region element. GTP-binding positions include 69-73 (DTAGQ), 127-130 (NKSD), and 157-158 (SA). 2 S-geranylgeranyl cysteine lipidation sites follow: cysteine 218 and cysteine 219.

It belongs to the small GTPase superfamily. Rab family.

The protein localises to the cell membrane. Functionally, intracellular vesicle trafficking and protein transport. The polypeptide is Ras-related protein RABA5a (RABA5A) (Arabidopsis thaliana (Mouse-ear cress)).